A 981-amino-acid chain; its full sequence is Helicase-like transcription factor CHR28 (981 aa).

Disordered regions lie at residues 1–66 and 112–194; these read MDSA…LDSR and KRTH…RNSE. Residues 46–65 are compositionally biased toward polar residues; that stretch reads SGSSSGANGHTKTGLTNLDS. Residues 119–128 are compositionally biased toward pro residues; that stretch reads FSRPPFPPRP. Positions 166–176 are enriched in polar residues; it reads HGTSASPSHFN. Positions 181–194 are enriched in basic and acidic residues; that stretch reads PMHRNGIGEERNSE. In terms of domain architecture, Helicase ATP-binding spans 241-526; that stretch reads ETNSLHCMGG…YSYFRFLKYD (286 aa). Position 254 to 261 (254 to 261) interacts with ATP; sequence DDQGLGKT. 2 disordered regions span residues 293–337 and 439–462; these read DADD…RKFN and VVGT…SDPD. Residues 439–451 show a composition bias toward basic residues; the sequence is VVGTTKKSKKKKG. The segment at 679 to 718 adopts an RING-type; degenerate zinc-finger fold; the sequence is CCVCHDPPEDPVVTLCGHIFCYQCVSDYITGDEDTCPAPR. A compositionally biased stretch (polar residues) spans 779 to 798; that stretch reads NQGTSNSTQNGQMASSSQQP. Residues 779–808 are disordered; it reads NQGTSNSTQNGQMASSSQQPNDDDDDDDDD. Residues 799 to 808 show a composition bias toward acidic residues; it reads NDDDDDDDDD. The Helicase C-terminal domain occupies 804 to 976; it reads DDDDDVTIVE…ATRLTVDDLK (173 aa).

This sequence belongs to the SNF2/RAD54 helicase family. RAD16 subfamily. As to quaternary structure, interacts with SUVR2.

The protein resides in the nucleus. In terms of biological role, probable helicase-like transcription factor involved in transcriptional gene silencing. Associates with SUVR2 and contributes to transcriptional gene silencing at RNA-directed DNA methylation (RdDM) target loci but also at RdDM-independent target loci. May be involved in nucleosome positioning to form ordered nucleosome arrays on chromatin. Associates with SUVR2 and functions redundantly with FRG1. Required for the efficient methylation of a broad range of RdDM target loci. In Arabidopsis thaliana (Mouse-ear cress), this protein is Helicase-like transcription factor CHR28.